The following is a 516-amino-acid chain: BAR/IMD domain-containing adapter protein 2-like 1 (516 aa).

In terms of domain architecture, IMD spans 1 to 249 (MSRGPEEVNR…MNMIEEIKTP (249 aa)). A coiled-coil region spans residues 115-148 (MNATLKRYQAEHRNKLDSLEKSQAELKKIRRKSQ). Residues T248 and T257 each carry the phosphothreonine modification. A phosphoserine mark is found at S261 and S281. Positions 303–328 (NPATAGQSAEKTNNSTANTGDDPSLQ) are disordered. Residue S332 is modified to Phosphoserine. The region spanning 340-403 (MKKQKVKTIF…PSSYTKLLEE (64 aa)) is the SH3 domain. A Phosphothreonine modification is found at T413. 3 positions are modified to phosphoserine: S415, S421, and S423. The tract at residues 454–516 (ADAAKIPSTS…TNDRSAPIIR (63 aa)) is disordered. The span at 474 to 485 (ATSTSPSDSNGT) shows a compositional bias: polar residues. A binds F-actin region spans residues 488-516 (PPFLSGENPFATVKLRPTVTNDRSAPIIR).

As to quaternary structure, interacts with RAC1. Binds to F-actin. Interacts with FASLG. In terms of processing, phosphorylated on tyrosine in response to insulin.

Its subcellular location is the cytoplasm. The protein localises to the cytoskeleton. May function as adapter protein. Involved in the formation of clusters of actin bundles. Plays a role in the reorganization of the actin cytoskeleton in response to bacterial infection. The chain is BAR/IMD domain-containing adapter protein 2-like 1 (Baiap2l1) from Rattus norvegicus (Rat).